We begin with the raw amino-acid sequence, 376 residues long: MSGSVTSTTTETRLCPSNQGSAKKYRPWNDFRSDTLTVPTDEMRRIMYEASDGDCVYEEDEDTRKLEVYVAKLTGKEAALFVTSGTQGNQLCIRSHLHQPPHSIICDDRAHIYNWEAGAIGLFTQAIVRPISPKNNVYITAEEIENKLILGNDIHFSPTGLICLENTIKGAVVPLDEVARISGLAKAHKIPLHCDGARLWDAAVASNVSIKEYCSYFDSVSLCLSKGLAAPVGSIIVGPRDFIAKAKWFRKAYGGGLRQSGMLAAAGLYSIQHNFPLLKQVHKYAIEVAEYAESLGIELEVPTQSNMVTLANINVAILCDEAKKSGIILMGPRIVFHIQITPDAVEILKNVLRRTVERQAVETHIVAKPGEFCVGY.

The segment covering 1 to 21 (MSGSVTSTTTETRLCPSNQGS) has biased composition (polar residues). The disordered stretch occupies residues 1–22 (MSGSVTSTTTETRLCPSNQGSA). Lysine 226 is subject to N6-(pyridoxal phosphate)lysine.

It belongs to the threonine aldolase family. As to quaternary structure, homotetramer. It depends on pyridoxal 5'-phosphate as a cofactor.

The enzyme catalyses L-threonine = acetaldehyde + glycine. It catalyses the reaction L-allo-threonine = acetaldehyde + glycine. It functions in the pathway amino-acid degradation; L-threonine degradation via aldolase pathway; acetaldehyde and glycine from L-threonine: step 1/1. This chain is Probable low-specificity L-threonine aldolase (gly1), found in Schizosaccharomyces pombe (strain 972 / ATCC 24843) (Fission yeast).